A 1515-amino-acid chain; its full sequence is Adhesion G protein-coupled receptor L1 (1515 aa).

The signal sequence occupies residues 1–24 (MARLAAALWSLCVTTVLVTSATQG). Topologically, residues 25–857 (LSRAGLPFGL…EIYQGRINEL (833 aa)) are extracellular. The SUEL-type lectin domain occupies 40-129 (ACEGYPIELR…KYLEVQYDCV (90 aa)). Disulfide bonds link Cys-41–Cys-71, Cys-50–Cys-128, Cys-83–Cys-115, Cys-96–Cys-102, and Cys-140–Cys-322. Glu-42 provides a ligand contact to alpha-L-rhamnose. A glycan (N-linked (GlcNAc...) asparagine) is linked at Asn-98. An alpha-L-rhamnose-binding site is contributed by 117 to 120 (GTYK). Residues 139-398 (VCPGTLQKVL…VVRYSLEFGP (260 aa)) form the Olfactomedin-like domain. A disordered region spans residues 400 to 468 (DPSAGPATSP…APAPSTRRPP (69 aa)). The span at 405–441 (PATSPPLSTTTTARPTPLTSTASPAATTPLRRAPLTT) shows a compositional bias: low complexity. Pro residues predominate over residues 453–468 (DLPPATAPAPSTRRPP). 2 disulfides stabilise this stretch: Cys-480–Cys-515 and Cys-503–Cys-532. N-linked (GlcNAc...) asparagine glycosylation is found at Asn-531, Asn-640, Asn-741, Asn-800, Asn-805, and Asn-826. One can recognise a GAIN-B domain in the interval 669 to 850 (PARFLAAKQN…AVLMAHREIY (182 aa)). Intrachain disulfides connect Cys-801–Cys-832 and Cys-820–Cys-834. Residues 801–850 (CSFWNYSERSMLGYWSTQGCRLVESNKTHTTCACSHLTNFAVLMAHREIY) form a GPS region. Residues 858–878 (LLSVITWVGIVISLVCLAICI) traverse the membrane as a helical segment. The Cytoplasmic segment spans residues 879-892 (STFCFLRGLQTDRN). A helical membrane pass occupies residues 893 to 913 (TIHKNLCINLFLAELLFLVGI). Residues 914-919 (DKTQYE) are Extracellular-facing. Residues 920–940 (VACPIFAGLLHYFFLAAFSWL) form a helical membrane-spanning segment. The Cytoplasmic portion of the chain corresponds to 941 to 964 (CLEGVHLYLLLVEVFESEYSRTKY). The chain crosses the membrane as a helical span at residues 965-985 (YYLGGYCFPALVVGIAAAIDY). Residues 986–1001 (RSYGTEKACWLRVDNY) are Extracellular-facing. Residues 1002–1022 (FIWSFIGPVSFVIVVNLVFLM) traverse the membrane as a helical segment. Over 1023-1049 (VTLHKMIRSSSVLKPDSSRLDNIKSWA) the chain is Cytoplasmic. Residues 1050–1070 (LGAIALLFLLGLTWAFGLLFI) form a helical membrane-spanning segment. Residues 1071–1074 (NKES) are Extracellular-facing. The chain crosses the membrane as a helical span at residues 1075-1095 (VVMAYLFTTFNAFQGVFIFVF). The Cytoplasmic segment spans residues 1096–1515 (HCALQKKVHK…DGQMQLVTSL (420 aa)). Positions 1144–1184 (TQVPGQGRHIHQVSLGPRGRSALPESQKDPGGQSGPGDPLT) are disordered. An Omega-N-methylarginine modification is found at Arg-1237. Phosphoserine is present on Ser-1263. Disordered stretches follow at residues 1291–1316 (FNNS…RGRN), 1337–1369 (RGAS…PGGA), 1401–1470 (ESES…SRPP), and 1492–1515 (YLAA…VTSL). 2 stretches are compositionally biased toward pro residues: residues 1345–1356 (GPPPEPPVPPVP) and 1449–1461 (ALPP…PGPP). A phosphoserine mark is found at Ser-1497 and Ser-1514.

This sequence belongs to the G-protein coupled receptor 2 family. Adhesion G-protein coupled receptor (ADGR) subfamily. As to quaternary structure, forms a heterodimer, consisting of a large extracellular region (p120) non-covalently linked to a seven-transmembrane moiety (p85). Interacts with syntaxin and with proteins of the SHANK family via the PDZ domain. Isoform 2 interacts with TENM2. Interacts (via extracellular domain) with FLRT1, FLRT2 and FLRT3 (via extracellular domain). In terms of processing, autoproteolytically cleaved into 2 subunits, an extracellular subunit and a seven-transmembrane subunit. This proteolytic processing takes place early in the biosynthetic pathway, either in the endoplasmic reticulum or in the early compartment of the Golgi apparatus. In terms of tissue distribution, expressed in the brain (at protein level). Brain specific distribution but low levels are also detected in most tissues.

The protein resides in the cell membrane. The protein localises to the cell projection. It is found in the axon. It localises to the growth cone. Its subcellular location is the synapse. The protein resides in the presynaptic cell membrane. The protein localises to the synaptosome. Calcium-independent receptor of high affinity for alpha-latrotoxin, an excitatory neurotoxin present in black widow spider venom which triggers massive exocytosis from neurons and neuroendocrine cells. Receptor probably implicated in the regulation of exocytosis. Functionally, receptor for TENM2 that mediates heterophilic synaptic cell-cell contact and postsynaptic specialization. This Rattus norvegicus (Rat) protein is Adhesion G protein-coupled receptor L1.